The chain runs to 104 residues: Large ribosomal subunit protein bL21 (104 aa).

The protein belongs to the bacterial ribosomal protein bL21 family. As to quaternary structure, part of the 50S ribosomal subunit. Contacts protein L20.

Its function is as follows. This protein binds to 23S rRNA in the presence of protein L20. This Helicobacter hepaticus (strain ATCC 51449 / 3B1) protein is Large ribosomal subunit protein bL21.